The primary structure comprises 32 residues: Corticostatin-related peptide RK-1 (32 aa).

Disulfide bonds link Cys-3–Cys-29, Cys-5–Cys-19, and Cys-9–Cys-28.

It is found in the secreted. Has antimicrobial activity against E.coli and activates ion channel activity. This chain is Corticostatin-related peptide RK-1, found in Oryctolagus cuniculus (Rabbit).